Reading from the N-terminus, the 1597-residue chain is Rho guanine nucleotide exchange factor 5 (1597 aa).

Disordered regions lie at residues 138 to 246, 258 to 455, and 467 to 1072; these read PFSS…EGTL, EEQM…SLEP, and GSFL…VFRE. The residue at position 184 (Ser184) is a Phosphoserine. Over residues 192 to 204 the composition is skewed to polar residues; that stretch reads ETNQNEGSESGTI. The span at 217-237 shows a compositional bias: low complexity; the sequence is ESQGLLHPQEVQVLEEQGQQE. The segment covering 266-278 has biased composition (basic and acidic residues); that stretch reads NDEKGEQKQKQEQ. The segment covering 299 to 309 has biased composition (acidic residues); it reads GLNDGEWEQED. Composition is skewed to basic and acidic residues over residues 323–368 and 394–404; these read GEER…KEKG and RSREEENEHHG. Over residues 428 to 438 the composition is skewed to polar residues; sequence LMTQIPGTQTE. Ser445 and Ser450 each carry phosphoserine. The span at 474–490 shows a compositional bias: basic and acidic residues; sequence SPDKEIDQNSQQEESRL. Over residues 512–522 the composition is skewed to pro residues; that stretch reads PRTPDSAPPSP. Composition is skewed to polar residues over residues 583 to 601 and 655 to 682; these read STGT…TVQH and DYST…NLER. Positions 731-746 are enriched in basic and acidic residues; the sequence is QRRDTHPSVVETDGHA. Pro residues-rich tracts occupy residues 812–828 and 838–856; these read PLPP…PPIS and PLPP…PLPP. Arg866 carries the post-translational modification Asymmetric dimethylarginine. Residues 901–920 are compositionally biased toward low complexity; that stretch reads ATARSTESFTSTSRSKSEVS. The segment covering 926–941 has biased composition (polar residues); that stretch reads SNMTNFLCPSSPTTPW. The span at 950 to 969 shows a compositional bias: basic and acidic residues; sequence SKDEAGVSEHPEAPAREPLR. Phosphoserine is present on residues Ser983, Ser1011, and Ser1044. The segment covering 990-1012 has biased composition (basic and acidic residues); it reads QPEKPSHLHLEKASSWPHRRDSG. The span at 1057-1072 shows a compositional bias: basic and acidic residues; it reads AVEKHPGPSDTVVFRE. A Phosphoserine modification is found at Ser1126. The DH domain occupies 1174–1358; sequence KLQEVKFELI…EQLIRDCNNN (185 aa). Residues 1390–1502 enclose the PH domain; it reads WLVKSGELTA…WISALAMPRE (113 aa). Positions 1510–1571 constitute an SH3 domain; that stretch reads YNSPQVQCLR…PVQQVEFISN (62 aa).

Interacts with SRC. Forms a ternary complex with SRC and the PI3K 85 kDa subunit. Interacts with and is activated by the heterodimer formed by GNB1 and GNG2. Interacts with ODAM (via C-terminus). Interacts with RHOA. Activation of SRC induces tyrosine phosphorylation of ARHGEF5. As to expression, ubiquitously expressed with highest levels in placenta. High levels are also found in colon, kidney, trachea, prostate, liver, pancreas, pituitary gland, thyroid gland and mammary gland. In fetal tissues, expressed at high levels in kidney, lung and liver. Expressed at low levels in lung and heart.

It is found in the cytoplasm. The protein localises to the nucleus. The protein resides in the cell projection. Its subcellular location is the podosome. Its function is as follows. Guanine nucleotide exchange factor which activates Rho GTPases. Strongly activates RHOA. Also strongly activates RHOB, weakly activates RHOC and RHOG and shows no effect on RHOD, RHOV, RHOQ or RAC1. Involved in regulation of cell shape and actin cytoskeletal organization. Plays a role in actin organization by generating a loss of actin stress fibers and the formation of membrane ruffles and filopodia. Required for SRC-induced podosome formation. Involved in positive regulation of immature dendritic cell migration. In Homo sapiens (Human), this protein is Rho guanine nucleotide exchange factor 5 (ARHGEF5).